The following is a 107-amino-acid chain: Putative ATP synthase subunit f, mitochondrial (107 aa).

The protein belongs to the ATPase F chain family. As to quaternary structure, F-type ATPases have 2 components, CF(1) - the catalytic core - and CF(0) - the membrane proton channel. CF(0) seems to have nine subunits: a, b, c, d, e, f, g, F6 and 8 (or A6L).

The protein localises to the mitochondrion membrane. Mitochondrial membrane ATP synthase (F(1)F(0) ATP synthase or Complex V) produces ATP from ADP in the presence of a proton gradient across the membrane which is generated by electron transport complexes of the respiratory chain. F-type ATPases consist of two structural domains, F(1) - containing the extramembraneous catalytic core and F(0) - containing the membrane proton channel, linked together by a central stalk and a peripheral stalk. During catalysis, ATP synthesis in the catalytic domain of F(1) is coupled via a rotary mechanism of the central stalk subunits to proton translocation. Part of the complex F(0) domain. Minor subunit located with subunit a in the membrane. This chain is Putative ATP synthase subunit f, mitochondrial, found in Drosophila melanogaster (Fruit fly).